Consider the following 330-residue polypeptide: Olfactory receptor 11H6 (330 aa).

Residues 1–43 (MFFIIHSLVTSVFLTALGPQNRTMHFVTEFVLLGFHGQREMQS) are Extracellular-facing. Asn21 is a glycosylation site (N-linked (GlcNAc...) asparagine). The chain crosses the membrane as a helical span at residues 44 to 64 (CFFSFILVLYLLTLLGNGAIV). At 65–72 (CAVKLDRR) the chain is on the cytoplasmic side. The chain crosses the membrane as a helical span at residues 73 to 93 (LHTPMYILLGNFAFLEIWYIS). Residues 94–117 (STVPNMLVNILSEIKTISFSGCFL) lie on the Extracellular side of the membrane. Cys115 and Cys207 form a disulfide bridge. A helical transmembrane segment spans residues 118 to 138 (QFYFFFSLGTTECFFLSVMAY). Over 139–157 (DRYLAICRPLHYPSIMTGK) the chain is Cytoplasmic. A helical transmembrane segment spans residues 158 to 178 (FCIILVCVCWVGGFLCYPVPI). The Extracellular segment spans residues 179–215 (VLISQLPFCGPNIIDHLVCDPGPLFALACISAPSTEL). Residues 216–235 (ICYTFNSMIIFGPFLSILGS) traverse the membrane as a helical segment. Topologically, residues 236–255 (YTLVIRAVLCIPSGAGRTKA) are cytoplasmic. The helical transmembrane segment at 256–276 (FSTCGSHLMVVSLFYGTLMVM) threads the bilayer. Residues 277–289 (YVSPTSGNPAGMQ) lie on the Extracellular side of the membrane. The chain crosses the membrane as a helical span at residues 290–310 (KIITLVYTAMTPFLNPLIYSL). The Cytoplasmic portion of the chain corresponds to 311–330 (RNKDMKDALKRVLGLTVSQN).

It belongs to the G-protein coupled receptor 1 family.

Its subcellular location is the cell membrane. Functionally, odorant receptor. The polypeptide is Olfactory receptor 11H6 (OR11H6) (Homo sapiens (Human)).